Here is a 444-residue protein sequence, read N- to C-terminus: Homogentisate 1,2-dioxygenase (444 aa).

The active-site Proton acceptor is the His298. His341 and Glu347 together coordinate Fe cation. The homogentisate site is built by Tyr356 and His377. Fe cation is bound at residue His377.

This sequence belongs to the homogentisate dioxygenase family. In terms of assembly, hexamer; dimer of trimers. It depends on Fe cation as a cofactor.

The catalysed reaction is homogentisate + O2 = 4-maleylacetoacetate + H(+). Its pathway is amino-acid degradation; L-phenylalanine degradation; acetoacetate and fumarate from L-phenylalanine: step 4/6. In terms of biological role, involved in the catabolism of homogentisate (2,5-dihydroxyphenylacetate or 2,5-OH-PhAc), a central intermediate in the degradation of phenylalanine and tyrosine. Catalyzes the oxidative ring cleavage of the aromatic ring of homogentisate to yield maleylacetoacetate. The sequence is that of Homogentisate 1,2-dioxygenase from Burkholderia cenocepacia (strain ATCC BAA-245 / DSM 16553 / LMG 16656 / NCTC 13227 / J2315 / CF5610) (Burkholderia cepacia (strain J2315)).